The sequence spans 197 residues: MALQQIVEQTVAGLGYDLVEIERSAGGLLRITIDLVWVPPTDEVSAAVGVEQFITVEDCEKVTRQLQFALEVEGVDYTRLEVSSPGIDRLLRNEADFKRFEGEVIDITLKQPMGAAAGGQVHANRKKFRGTLERADSGGWQIVWSDEPPVKPGQRISKKRVPAPLQALGFTLDELREARLAPIVDFKGRGTKPGEPG.

Belongs to the RimP family.

Its subcellular location is the cytoplasm. Its function is as follows. Required for maturation of 30S ribosomal subunits. The protein is Ribosome maturation factor RimP of Acidovorax ebreus (strain TPSY) (Diaphorobacter sp. (strain TPSY)).